The primary structure comprises 542 residues: Mitogen-activated protein kinase 14 (542 aa).

The Protein kinase domain maps to 13–304 (YKIEEVIGKG…AEEALADPYF (292 aa)). ATP is bound by residues 19-27 (IGKGSYGVV) and Lys-42. Asp-139 (proton acceptor) is an active-site residue. Thr-175 is modified (phosphothreonine). The TXY motif lies at 175-177 (TDY). Position 177 is a phosphotyrosine (Tyr-177). Disordered regions lie at residues 388-412 (STAA…DNRP) and 482-542 (RNPA…SGHW). Positions 488–507 (PNSSVPLGSSYPRRNQTCKS) are enriched in polar residues.

This sequence belongs to the protein kinase superfamily. CMGC Ser/Thr protein kinase family. MAP kinase subfamily. Post-translationally, dually phosphorylated on Thr-175 and Tyr-177, which activates the enzyme.

It catalyses the reaction L-seryl-[protein] + ATP = O-phospho-L-seryl-[protein] + ADP + H(+). It carries out the reaction L-threonyl-[protein] + ATP = O-phospho-L-threonyl-[protein] + ADP + H(+). With respect to regulation, activated by threonine and tyrosine phosphorylation. This is Mitogen-activated protein kinase 14 (MPK14) from Oryza sativa subsp. japonica (Rice).